An 82-amino-acid polypeptide reads, in one-letter code: NAAKTIADIIRTCLGPKSMMKMLLDPMGGIVMTNDGNAILREIQVQHPAAKSMIEISRTQDEEVGDGTTSVIILAGEMLSVA.

Glycine 15 lines the ADP pocket. Glycine 15 is a binding site for ATP. Aspartate 66 is a Mg(2+) binding site. ADP is bound by residues glycine 67, threonine 68, threonine 69, and serine 70. ATP-binding residues include glycine 67, threonine 68, and threonine 69.

It belongs to the TCP-1 chaperonin family. As to quaternary structure, component of the chaperonin-containing T-complex (TRiC), a hexadecamer composed of two identical back-to-back stacked rings enclosing a protein folding chamber. Each ring is made up of eight different subunits: TCP1/CCT1, CCT2, CCT3, CCT4, CCT5, CCT6A/CCT6, CCT7, CCT8. Interacts with PACRG. Interacts with DNAAF4. Interacts with DLEC1.

It localises to the cytoplasm. The catalysed reaction is ATP + H2O = ADP + phosphate + H(+). Functionally, component of the chaperonin-containing T-complex (TRiC), a molecular chaperone complex that assists the folding of actin, tubulin and other proteins upon ATP hydrolysis. The TRiC complex mediates the folding of WRAP53/TCAB1, thereby regulating telomere maintenance. As part of the TRiC complex may play a role in the assembly of BBSome, a complex involved in ciliogenesis regulating transports vesicles to the cilia. This chain is T-complex protein 1 subunit gamma (CCT3), found in Sus scrofa (Pig).